Reading from the N-terminus, the 132-residue chain is Small ribosomal subunit protein uS8 (132 aa).

Belongs to the universal ribosomal protein uS8 family. In terms of assembly, part of the 30S ribosomal subunit. Contacts proteins S5 and S12.

One of the primary rRNA binding proteins, it binds directly to 16S rRNA central domain where it helps coordinate assembly of the platform of the 30S subunit. The chain is Small ribosomal subunit protein uS8 from Tropheryma whipplei (strain Twist) (Whipple's bacillus).